The sequence spans 502 residues: Lipoyl synthase, apicoplast (502 aa).

The first 16 residues, 1–16, serve as a signal peptide directing secretion; sequence MNFLVLFFSYSIFVLP. [4Fe-4S] cluster contacts are provided by C192, C197, C203, C218, C222, C225, and S433. The region spanning 204–422 is the Radical SAM core domain; that stretch reads WNIGTATIML…KDVGLKMGFK (219 aa).

It belongs to the radical SAM superfamily. Lipoyl synthase family. Requires [4Fe-4S] cluster as cofactor.

The protein localises to the plastid. It is found in the apicoplast. The enzyme catalyses [[Fe-S] cluster scaffold protein carrying a second [4Fe-4S](2+) cluster] + N(6)-octanoyl-L-lysyl-[protein] + 2 oxidized [2Fe-2S]-[ferredoxin] + 2 S-adenosyl-L-methionine + 4 H(+) = [[Fe-S] cluster scaffold protein] + N(6)-[(R)-dihydrolipoyl]-L-lysyl-[protein] + 4 Fe(3+) + 2 hydrogen sulfide + 2 5'-deoxyadenosine + 2 L-methionine + 2 reduced [2Fe-2S]-[ferredoxin]. It functions in the pathway protein modification; protein lipoylation via endogenous pathway; protein N(6)-(lipoyl)lysine from octanoyl-[acyl-carrier-protein]: step 2/2. Its function is as follows. Catalyzes the radical-mediated insertion of two sulfur atoms into the C-6 and C-8 positions of the octanoyl moiety bound to the lipoyl domains of lipoate-dependent enzymes, thereby converting the octanoylated domains into lipoylated derivatives. This is Lipoyl synthase, apicoplast from Plasmodium yoelii yoelii.